The sequence spans 186 residues: Superoxide dismutase [Cu-Zn] (186 aa).

Residues 1–20 (MKKTVLALMFSCGMVASAFA) form the signal peptide. The Cu cation site is built by His-79, His-81, and His-104. Residues Cys-86 and Cys-182 are joined by a disulfide bond. Zn(2+) is bound by residues His-104, His-113, His-122, and Asp-125. His-160 contributes to the Cu cation binding site.

This sequence belongs to the Cu-Zn superoxide dismutase family. Homodimer. Requires Cu cation as cofactor. It depends on Zn(2+) as a cofactor.

It localises to the periplasm. The enzyme catalyses 2 superoxide + 2 H(+) = H2O2 + O2. Functionally, destroys radicals which are normally produced within the cells and which are toxic to biological systems. The protein is Superoxide dismutase [Cu-Zn] (sodC) of Pasteurella multocida (strain Pm70).